A 500-amino-acid polypeptide reads, in one-letter code: MGLLIGDDLWAVVIFTAIFLLLVDLVHRHKFWTAHYPPGPVPLPGLGNLLQVDFENMPYSLYKLRSRYGDVFSLQIAWKPVVVINGLKAVRELLVTYGEDTADRPLLPIYNHLGYGNKSKGVVLAPYGPEWREQRRFSVSTLRDFGVGKKSLEQWVTEEAGHLCDTFAKEAEHPFNPSILLSKAVSNVIASLVYARRFEYEDPFFNRMLKTLKESFGEDTGFMAEVLNAIPILLQIPGLPGKVFPKLNSFIALVDKMLIEHKKSWDPAQPPRDMTDAFLAEMQKAKGNPESSFNDENLRLVVIDLFMAGMVTTSTTLSWALLLMILHPDVQRRVHEEIDEVIGQVRRPEMADQARMPFTNAVIHEVQRFADIVPTNIPHMTSRDIKFQGFLIPKGTTLIPNLSSVLKDETVWEKPLRFHPEHFLDAQGNFVKHEAFMPFSAGRRACLGEPLARMELFLFFTCLLQRFSFSVLAGRPRPSTHGVYALPVTPQPYQLCAVAR.

Ser249 carries the phosphoserine modification. Cys446 is a heme binding site.

This sequence belongs to the cytochrome P450 family. It depends on heme as a cofactor.

It localises to the endoplasmic reticulum membrane. It is found in the microsome membrane. The enzyme catalyses an organic molecule + reduced [NADPH--hemoprotein reductase] + O2 = an alcohol + oxidized [NADPH--hemoprotein reductase] + H2O + H(+). Functionally, cytochromes P450 are a group of heme-thiolate monooxygenases. In liver microsomes, this enzyme is involved in an NADPH-dependent electron transport pathway. It oxidizes a variety of structurally unrelated compounds, including steroids, fatty acids, and xenobiotics. This is Cytochrome P450 2D26 (Cyp2d26) from Rattus norvegicus (Rat).